Reading from the N-terminus, the 300-residue chain is 7-methylguanosine phosphate-specific 5'-nucleotidase (300 aa).

The active-site Nucleophile is Asp41. Mg(2+) is bound by residues Asp41 and Asp43. Asp43 (proton donor) is an active-site residue. A CMP-binding site is contributed by Glu88. Glu88 contacts N(7)-methyl-GMP. Substrate contacts are provided by residues 156–157 and Lys205; that span reads SA. Residue Asp230 coordinates Mg(2+). Lys256 is subject to N6-acetyllysine.

The protein belongs to the pyrimidine 5'-nucleotidase family. As to quaternary structure, monomer.

It is found in the cytoplasm. The catalysed reaction is N(7)-methyl-GMP + H2O = N(7)-methylguanosine + phosphate. The enzyme catalyses CMP + H2O = cytidine + phosphate. It catalyses the reaction a ribonucleoside 5'-phosphate + H2O = a ribonucleoside + phosphate. In terms of biological role, specifically hydrolyzes 7-methylguanosine monophosphate (m(7)GMP) to 7-methylguanosine and inorganic phosphate. The specific activity for m(7)GMP may protect cells against undesired salvage of m(7)GMP and its incorporation into nucleic acids. Also has weak activity for CMP. UMP and purine nucleotides are poor substrates. The polypeptide is 7-methylguanosine phosphate-specific 5'-nucleotidase (Nt5c3b) (Rattus norvegicus (Rat)).